A 516-amino-acid polypeptide reads, in one-letter code: Glycerol-3-phosphate dehydrogenase 1 (516 aa).

28–56 (DVIVIGGGITGVGIALDAATRGLTVALVE) serves as a coordination point for FAD.

The protein belongs to the FAD-dependent glycerol-3-phosphate dehydrogenase family. FAD serves as cofactor.

Its subcellular location is the cytoplasm. It catalyses the reaction a quinone + sn-glycerol 3-phosphate = dihydroxyacetone phosphate + a quinol. This is Glycerol-3-phosphate dehydrogenase 1 (glpD1) from Mycobacterium bovis (strain ATCC BAA-935 / AF2122/97).